A 182-amino-acid polypeptide reads, in one-letter code: Ribosome maturation factor RimM (182 aa).

Residues Gln101 to Leu174 enclose the PRC barrel domain.

The protein belongs to the RimM family. As to quaternary structure, binds ribosomal protein uS19.

It is found in the cytoplasm. Its function is as follows. An accessory protein needed during the final step in the assembly of 30S ribosomal subunit, possibly for assembly of the head region. Essential for efficient processing of 16S rRNA. May be needed both before and after RbfA during the maturation of 16S rRNA. It has affinity for free ribosomal 30S subunits but not for 70S ribosomes. This is Ribosome maturation factor RimM from Roseiflexus sp. (strain RS-1).